The chain runs to 374 residues: o-succinylbenzoate synthase (374 aa).

K164 functions as the Proton donor in the catalytic mechanism. Mg(2+) contacts are provided by D189, E214, and D239. The Proton acceptor role is filled by K263.

This sequence belongs to the mandelate racemase/muconate lactonizing enzyme family. MenC type 2 subfamily. In terms of assembly, homodimer. It depends on a divalent metal cation as a cofactor.

The enzyme catalyses (1R,6R)-6-hydroxy-2-succinyl-cyclohexa-2,4-diene-1-carboxylate = 2-succinylbenzoate + H2O. It functions in the pathway quinol/quinone metabolism; 1,4-dihydroxy-2-naphthoate biosynthesis; 1,4-dihydroxy-2-naphthoate from chorismate: step 4/7. Its pathway is quinol/quinone metabolism; menaquinone biosynthesis. Its function is as follows. Converts 2-succinyl-6-hydroxy-2,4-cyclohexadiene-1-carboxylate (SHCHC) to 2-succinylbenzoate (OSB). Also acts as a N-succinylamino acid racemase (NSAR) that catalyzes the racemization of N-succinyl-L-phenylglycine. L.innocua has the menaquinone synthesis pathway, indicating that the species requires OSBS activity. However, the NSAR/OSBS is not encoded in the menaquinone operon, raising the possibility that both NSAR and OSBS are biological functions. This Listeria innocua serovar 6a (strain ATCC BAA-680 / CLIP 11262) protein is o-succinylbenzoate synthase.